We begin with the raw amino-acid sequence, 838 residues long: Protein P (838 aa).

The interval 1-179 (MPLSYQHFRK…FCGSPYSWEQ (179 aa)) is terminal protein domain (TP). The spacer stretch occupies residues 180 to 341 (ELQHSQRHGD…YCLSHLVNLL (162 aa)). The disordered stretch occupies residues 218 to 242 (LGLQPHQGPLATSQPGRSGSIRPRA). The tract at residues 342 to 685 (EDWGPCVEHG…YLNLYPVARQ (344 aa)) is polymerase/reverse transcriptase domain (RT). In terms of domain architecture, Reverse transcriptase spans 352 to 595 (EHHIRIPRTP…YSLNFMGYVI (244 aa)). 3 residues coordinate Mg(2+): Asp-424, Asp-546, and Asp-547.

The protein belongs to the hepadnaviridae P protein family.

It catalyses the reaction DNA(n) + a 2'-deoxyribonucleoside 5'-triphosphate = DNA(n+1) + diphosphate. The catalysed reaction is Endonucleolytic cleavage to 5'-phosphomonoester.. With respect to regulation, activated by host HSP70 and HSP40 in vitro to be able to bind the epsilon loop of the pgRNA. Because deletion of the RNase H region renders the protein partly chaperone-independent, the chaperones may be needed indirectly to relieve occlusion of the RNA-binding site by this domain. Inhibited by several reverse-transcriptase inhibitors: Lamivudine, Adefovir and Entecavir. In terms of biological role, multifunctional enzyme that converts the viral RNA genome into dsDNA in viral cytoplasmic capsids. This enzyme displays a DNA polymerase activity that can copy either DNA or RNA templates, and a ribonuclease H (RNase H) activity that cleaves the RNA strand of RNA-DNA heteroduplexes in a partially processive 3'- to 5'-endonucleasic mode. Neo-synthesized pregenomic RNA (pgRNA) are encapsidated together with the P protein, and reverse-transcribed inside the nucleocapsid. Initiation of reverse-transcription occurs first by binding the epsilon loop on the pgRNA genome, and is initiated by protein priming, thereby the 5'-end of (-)DNA is covalently linked to P protein. Partial (+)DNA is synthesized from the (-)DNA template and generates the relaxed circular DNA (RC-DNA) genome. After budding and infection, the RC-DNA migrates in the nucleus, and is converted into a plasmid-like covalently closed circular DNA (cccDNA). The activity of P protein does not seem to be necessary for cccDNA generation, and is presumably released from (+)DNA by host nuclear DNA repair machinery. The sequence is that of Protein P from Homo sapiens (Human).